The following is a 186-amino-acid chain: NADH-dependent FMN reductase SfnF (186 aa).

It belongs to the SsuE family.

It catalyses the reaction FMNH2 + NAD(+) = FMN + NADH + 2 H(+). Functionally, involved in the dimethyl sulfide degradation pathway. Catalyzes the NADH-dependent reduction of FMN. The chain is NADH-dependent FMN reductase SfnF from Pseudomonas putida (Arthrobacter siderocapsulatus).